The primary structure comprises 430 residues: Adenylosuccinate synthetase (430 aa).

Residues 12 to 18 and 40 to 42 each bind GTP; these read GDEGKGK and GHT. Catalysis depends on aspartate 13, which acts as the Proton acceptor. Residues aspartate 13 and glycine 40 each contribute to the Mg(2+) site. Residues 13–16, 38–41, threonine 130, arginine 144, glutamine 225, threonine 240, and arginine 304 contribute to the IMP site; these read DEGK and NAGH. Catalysis depends on histidine 41, which acts as the Proton donor. 300 to 306 contributes to the substrate binding site; the sequence is ATTGRPR. GTP contacts are provided by residues arginine 306, 332 to 334, and 414 to 416; these read KLD and SIG.

The protein belongs to the adenylosuccinate synthetase family. In terms of assembly, homodimer. Mg(2+) serves as cofactor.

Its subcellular location is the cytoplasm. The enzyme catalyses IMP + L-aspartate + GTP = N(6)-(1,2-dicarboxyethyl)-AMP + GDP + phosphate + 2 H(+). It participates in purine metabolism; AMP biosynthesis via de novo pathway; AMP from IMP: step 1/2. In terms of biological role, plays an important role in the de novo pathway of purine nucleotide biosynthesis. Catalyzes the first committed step in the biosynthesis of AMP from IMP. This Geobacter metallireducens (strain ATCC 53774 / DSM 7210 / GS-15) protein is Adenylosuccinate synthetase.